A 596-amino-acid polypeptide reads, in one-letter code: Elongation factor 4 (596 aa).

Residues 2-183 enclose the tr-type G domain; the sequence is ENIRNFCIIA…AIIQRIPPPK (182 aa). GTP-binding positions include 14–19 and 130–133; these read DHGKST and NKID.

Belongs to the TRAFAC class translation factor GTPase superfamily. Classic translation factor GTPase family. LepA subfamily.

It localises to the cell inner membrane. It catalyses the reaction GTP + H2O = GDP + phosphate + H(+). Functionally, required for accurate and efficient protein synthesis under certain stress conditions. May act as a fidelity factor of the translation reaction, by catalyzing a one-codon backward translocation of tRNAs on improperly translocated ribosomes. Back-translocation proceeds from a post-translocation (POST) complex to a pre-translocation (PRE) complex, thus giving elongation factor G a second chance to translocate the tRNAs correctly. Binds to ribosomes in a GTP-dependent manner. The chain is Elongation factor 4 from Cytophaga hutchinsonii (strain ATCC 33406 / DSM 1761 / CIP 103989 / NBRC 15051 / NCIMB 9469 / D465).